The following is a 240-amino-acid chain: MSSILKSSTGSNHSSTSNHSSINNISQLSGSHGVEQQQLRPVLTLDASTAKLMYQTSQEMSSYIQQVANEPTIGLFHVQDHIRRNIPKNVELKKNIKALGEKIEEKSFDIDYSTKTIKTFSEIQTFSNISSLLQQSIERANKLVNNKSLLFVNSQMAAPSSSKTFSSFQQQHKIYQQQQTNLTPSKPTLSNDKTNDNNNNNNNLNFVEKIEKEEKIEKEDEGKEKDEKEKDDKDLNEKIN.

Disordered stretches follow at residues 1-33 (MSSILKSSTGSNHSSTSNHSSINNISQLSGSHG) and 163-240 (KTFS…EKIN). 2 stretches are compositionally biased toward low complexity: residues 7-26 (SSTGSNHSSTSNHSSINNIS) and 163-179 (KTFSSFQQQHKIYQQQQ). The span at 180–190 (TNLTPSKPTLS) shows a compositional bias: polar residues. Residues 196–205 (DNNNNNNNLN) are compositionally biased toward low complexity. The span at 208 to 240 (EKIEKEEKIEKEDEGKEKDEKEKDDKDLNEKIN) shows a compositional bias: basic and acidic residues. The stretch at 211–239 (EKEEKIEKEDEGKEKDEKEKDDKDLNEKI) forms a coiled coil.

This sequence belongs to the BORCS8 family.

The protein resides in the lysosome membrane. Its function is as follows. May participate in the coupling of lysosomes to microtubule plus-end-directed kinesin motor. The chain is BLOC-1-related complex subunit 8 homolog from Dictyostelium discoideum (Social amoeba).